The following is a 266-amino-acid chain: Integral membrane protein 2B (266 aa).

The Cytoplasmic portion of the chain corresponds to 1–54 (MVKVTFNSALAQKEAKKDEPKSSEEALIVPPDAVAVDCKDPGDVVPVGQRRAWC). The chain crosses the membrane as a helical; Signal-anchor for type II membrane protein span at residues 55-75 (WCMCFGLAFMLAGVILGGAYL). Topologically, residues 76 to 266 (YKYFALQPDD…KFAVETLICS (191 aa)) are lumenal. The interval 102–134 (EPSADAPAARYQTIEENIKIFEEDAVEFISVPV) is necessary for interaction with APP and inhibitor effects on APP processing. The BRICHOS domain maps to 137-231 (FADSDPANIV…LCHDKETYKL (95 aa)). Intrachain disulfides connect Cys164-Cys223 and Cys248-Cys265. Asn170 carries N-linked (GlcNAc...) asparagine glycosylation.

It belongs to the ITM2 family. Homodimer; disulfide-linked. Interacts with SPPL2A and SPPL2B. Interacts with APP. Mature BRI2 (mBRI2) interacts with the APP amyloid-beta A4 protein; the interaction occurs at the cell surface and in the endocytic compartments and enable alpha- and beta-secretase-induced APP cleavage inhibition. Mature BRI2 (mBRI2) interacts with the APP C99; the interaction occurs in the endocytic compartments and enable gamma-secretase-induced C99 cleavage inhibition. May form heterodimers with Bri23 peptide and APP amyloid-beta protein 40. Interacts with ADAM7 in sperm; the interaction increases following capacitation. In terms of processing, the ectodomain C-terminal part of the imBRI2 is processed by furin producing a secreted Bri23 peptide and a mature BRI2, membrane form (mBRI2). The remaining part of the ectodomain of mBRI2 containing the BRICHOS domain is cleaved by ADAM10 and is secreted (BRI2C, soluble form). The membrane-bound N-terminal fragment (BRI2C, membrane form) is further proteolytically processed by SPPL2A and SPPL2B through regulated intramembrane proteolysis producing a secreted C-peptide and a BRI2 intracellular domain (BRI2 ICD) released in the cytosol. Shedding by ADAM10 facilitates intramembrane cleavage but is not absolutely required for BRI2 ICD generation. Post-translationally, glycosylation at Asn-170 is important for cell surface localization, but doesn't affect furin- and ADAM10-induced proteolytic processing. Expressed in the brain, testis, testicular sperm, epididymis and mature epididymal sperm (at protein level).

It is found in the golgi apparatus membrane. The protein resides in the cell membrane. It localises to the endosome membrane. The protein localises to the secreted. In terms of biological role, plays a regulatory role in the processing of the amyloid-beta A4 precursor protein (APP) and acts as an inhibitor of the amyloid-beta peptide aggregation and fibrils deposition. Plays a role in the induction of neurite outgrowth. Functions as a protease inhibitor by blocking access of secretases to APP cleavage sites. Mature BRI2 (mBRI2) functions as a modulator of the amyloid-beta A4 precursor protein (APP) processing leading to a strong reduction in the secretion of secretase-processed amyloid-beta protein 40 and amyloid-beta protein 42. Its function is as follows. Bri23 peptide prevents aggregation of APP amyloid-beta protein 42 into toxic oligomers. The chain is Integral membrane protein 2B (Itm2b) from Mus musculus (Mouse).